A 292-amino-acid chain; its full sequence is Ribosomal protein L11 methyltransferase (292 aa).

S-adenosyl-L-methionine is bound by residues threonine 144, glycine 165, aspartate 187, and asparagine 229.

Belongs to the methyltransferase superfamily. PrmA family.

Its subcellular location is the cytoplasm. The catalysed reaction is L-lysyl-[protein] + 3 S-adenosyl-L-methionine = N(6),N(6),N(6)-trimethyl-L-lysyl-[protein] + 3 S-adenosyl-L-homocysteine + 3 H(+). Methylates ribosomal protein L11. The polypeptide is Ribosomal protein L11 methyltransferase (Azotobacter vinelandii (strain DJ / ATCC BAA-1303)).